Consider the following 138-residue polypeptide: Phosphoribosyl-AMP cyclohydrolase (138 aa).

The tract at residues 1 to 23 (MSEQSAPSPTPAAELSSDPASPL) is disordered. D100 is a binding site for Mg(2+). C101 is a Zn(2+) binding site. Mg(2+) is bound by residues D102 and D104. C117 and C124 together coordinate Zn(2+).

It belongs to the PRA-CH family. Homodimer. The cofactor is Mg(2+). Zn(2+) serves as cofactor.

Its subcellular location is the cytoplasm. The enzyme catalyses 1-(5-phospho-beta-D-ribosyl)-5'-AMP + H2O = 1-(5-phospho-beta-D-ribosyl)-5-[(5-phospho-beta-D-ribosylamino)methylideneamino]imidazole-4-carboxamide. Its pathway is amino-acid biosynthesis; L-histidine biosynthesis; L-histidine from 5-phospho-alpha-D-ribose 1-diphosphate: step 3/9. Its function is as follows. Catalyzes the hydrolysis of the adenine ring of phosphoribosyl-AMP. The protein is Phosphoribosyl-AMP cyclohydrolase of Paenarthrobacter aurescens (strain TC1).